A 765-amino-acid chain; its full sequence is E3 ubiquitin-protein ligase SMURF2 (765 aa).

A C2 domain is found at Met1 to Leu117. 3 consecutive WW domains span residues Asn157–Arg190, Pro251–Val284, and Gly297–Leu330. Residues Ser341 to Glu375 form a disordered region. A compositionally biased stretch (polar residues) spans Ala351–Ser369. In terms of domain architecture, HECT spans Arg431–Glu765. Cys733 acts as the Glycyl thioester intermediate in catalysis.

Its subcellular location is the nucleus. The protein resides in the cytoplasm. It is found in the cell membrane. The protein localises to the membrane raft. It carries out the reaction S-ubiquitinyl-[E2 ubiquitin-conjugating enzyme]-L-cysteine + [acceptor protein]-L-lysine = [E2 ubiquitin-conjugating enzyme]-L-cysteine + N(6)-ubiquitinyl-[acceptor protein]-L-lysine.. It participates in protein modification; protein ubiquitination. E3 ubiquitin-protein ligase which accepts ubiquitin from an E2 ubiquitin-conjugating enzyme in the form of a thioester and then directly transfers the ubiquitin to targeted substrates. This chain is E3 ubiquitin-protein ligase SMURF2 (smurf2), found in Danio rerio (Zebrafish).